The following is a 961-amino-acid chain: FYVE, RhoGEF and PH domain-containing protein 1 (961 aa).

Positions 1–11 (MHGHRAPGGAG) are enriched in gly residues. Residues 1–353 (MHGHRAPGGA…DEEEEEEKDR (353 aa)) are disordered. Over residues 27 to 38 (PPACADSDPGAS) the composition is skewed to low complexity. A Phosphoserine modification is found at Ser48. The span at 125 to 135 (PHPEGPQRLRS) shows a compositional bias: basic and acidic residues. Pro residues-rich tracts occupy residues 156 to 165 (GPKPQVPPKP) and 172 to 190 (RMPP…PLPA). An SH3-binding motif is present at residues 171–187 (PRMPPPLEPIPPPPSRP). The span at 199 to 213 (APRAEASPSSAAVSS) shows a compositional bias: low complexity. Phosphoserine is present on Ser205. Positions 231 to 255 (VPGPSPGPPEPVMLPQPTSQPPVPQ) are enriched in pro residues. The span at 273–284 (RDGEKVPNRDSG) shows a compositional bias: basic and acidic residues. 2 stretches are compositionally biased toward low complexity: residues 285-294 (IDSISSPSNS) and 316-325 (ALASVPVALA). Residues 335-351 (VDSDLEEEDDEEEEEEK) show a composition bias toward acidic residues. Residues 373-561 (KVFHIANELL…ATAAEHSNAA (189 aa)) form the DH domain. A PH 1 domain is found at 590-689 (ELIKEGHILK…WVQAINSTLL (100 aa)). The interval 702–726 (NSTNREDEDTPPNSPNVDLGKRAPT) is disordered. Thr711 carries the phosphothreonine modification. A Phosphoserine modification is found at Ser715. The FYVE-type zinc-finger motif lies at 730-790 (EKEVTMCMRC…VCTDCYVALH (61 aa)). 8 residues coordinate Zn(2+): Cys736, Cys739, Cys753, Cys756, Cys761, Cys764, Cys782, and Cys785. The PH 2 domain maps to 821 to 921 (NSVICSFLHY…WMAVLGRAGR (101 aa)). Residues 925 to 961 (FCPGPTLSEDREMEEAPVAALGATAEPPESPQTRDKT) are disordered.

Interacts with DBNL/ABP1 and CTTN. May interact with CCPG1. Binds CDC42. As to expression, expressed in fetal heart, brain, lung, kidney and placenta. Less expressed in liver; adult heart, brain, lung, pancreas and skeletal muscle.

The protein localises to the cytoplasm. It localises to the cell projection. The protein resides in the lamellipodium. Its subcellular location is the ruffle. It is found in the cytoskeleton. Activates CDC42, a member of the Ras-like family of Rho- and Rac proteins, by exchanging bound GDP for free GTP. Plays a role in regulating the actin cytoskeleton and cell shape. This Homo sapiens (Human) protein is FYVE, RhoGEF and PH domain-containing protein 1 (FGD1).